The sequence spans 253 residues: Large ribosomal subunit protein uL4 (253 aa).

The tract at residues 61–107 (GWGSGRGTSHVPRLVNSSRAARVPHARGGRRAHPPKPEADRSEKVNT) is disordered. Residues 82–94 (RVPHARGGRRAHP) show a composition bias toward basic residues. Basic and acidic residues predominate over residues 95-107 (PKPEADRSEKVNT).

This sequence belongs to the universal ribosomal protein uL4 family. In terms of assembly, part of the 50S ribosomal subunit.

One of the primary rRNA binding proteins, this protein initially binds near the 5'-end of the 23S rRNA. It is important during the early stages of 50S assembly. It makes multiple contacts with different domains of the 23S rRNA in the assembled 50S subunit and ribosome. Functionally, forms part of the polypeptide exit tunnel. The protein is Large ribosomal subunit protein uL4 of Methanosarcina barkeri (strain Fusaro / DSM 804).